A 408-amino-acid polypeptide reads, in one-letter code: Dicamba O-demethylase 1, ferredoxin reductase component (408 aa).

FAD contacts are provided by glycine 14, lysine 49, valine 82, arginine 130, aspartate 279, and valine 298.

Belongs to the FAD-dependent oxidoreductase family. In terms of assembly, monomer. The dicamba O-demethylase multicomponent enzyme system is composed of an oxygenase component (DdmC) and an electron transfer component formed by a ferredoxin reductase (DdmA1) and a ferredoxin (DdmB). In vitro, dicamba O-demethylase assays in which DdmA2 is substituted for DdmA1 demonstrate that the two enzymes possess nearly identical activities. The cofactor is FAD.

The catalysed reaction is 2 reduced [2Fe-2S]-[ferredoxin] + NAD(+) + H(+) = 2 oxidized [2Fe-2S]-[ferredoxin] + NADH. In terms of biological role, component of the dicamba O-demethylase multicomponent enzyme system involved in the degradation of the herbicide dicamba. In vitro, catalyzes the transfers of electrons from ferredoxin (DdmB) to NADH. Both NADH and NADPH support enzyme activity, with NADH being markedly more effective than NADPH. This chain is Dicamba O-demethylase 1, ferredoxin reductase component, found in Stenotrophomonas maltophilia (Pseudomonas maltophilia).